We begin with the raw amino-acid sequence, 163 residues long: Antimicrobial peptide 2 (163 aa).

The N-terminal stretch at 1-22 (MLNMKSFALLMLFATLVGVTIA) is a signal peptide. Chitin-binding type-1 domains follow at residues 26–66 (NGKC…EIEP) and 69–107 (AGQCYRGRCSGGLCCSKYGYCGSGPAYCGLGMCQGSCLP). Cystine bridges form between C29/C42, C36/C48, and C41/C55. The propeptide occupies 58 to 67 (NTPLSEIEPT). 4 cysteine pairs are disulfide-bonded: C72/C83, C77/C89, C82/C96, and C101/C105. Residues 100–163 (MCQGSCLPDM…QVEPAVTKAP (64 aa)) constitute a propeptide that is removed on maturation.

Expressed in roots, flowers, stem and leaves.

Functionally, antimicrobial peptide. The polypeptide is Antimicrobial peptide 2 (Stellaria media (Common chickweed)).